The chain runs to 395 residues: MSTPKSASFFTRKNILAFSFFIAFLVVVSVLVTVFFLDIKTGDVKTIINTINRTNWPWILLIVLGIVVTLAWNIIINWWVARRFCFHAPWWEWVLFACVVQFFQIVTPLSLGQDPFRLYWFIKKGMKKQTAVLLVTSTGAFWNLAQALITWPSFFVLSQNYALLEQNHEGFVSYWFSFAGMIFDVVVAILFIFIAYSKRMHVLIYSGVNQFRKWIKRPYLTKEQIYQRFIDKAEFNKLYGLEIKRLGLTIFKLLANILIAVVGYFSVFAVFAIVKKENATNNVIDQYSTADIFNITNIAITASNFIPVPSGEGATQFVMTSFLNAFKSAVGIESQVKQGVFLWRFLSVYIPAILFSLCFIGWVVQVVIEFKHPKPVLPTVNLINHHFWNNKKLHN.

8 helical membrane-spanning segments follow: residues 15–35 (ILAF…VTVF), 56–76 (WPWI…NIII), 86–106 (FHAP…FQIV), 131–151 (AVLL…LITW), 175–195 (WFSF…IFIA), 254–274 (LANI…FAIV), 298–318 (IAIT…TQFV), and 348–368 (VYIP…QVVI).

The protein localises to the cell membrane. This is an uncharacterized protein from Mycoplasma pneumoniae (strain ATCC 29342 / M129 / Subtype 1) (Mycoplasmoides pneumoniae).